We begin with the raw amino-acid sequence, 54 residues long: Large ribosomal subunit protein bL33 (54 aa).

It belongs to the bacterial ribosomal protein bL33 family.

This Corynebacterium glutamicum (strain R) protein is Large ribosomal subunit protein bL33.